A 393-amino-acid polypeptide reads, in one-letter code: 5-amino-6-(D-ribitylamino)uracil--L-tyrosine 4-hydroxyphenyl transferase (393 aa).

A Radical SAM core domain is found at 71–318; it reads VTYVINRNIN…TAVSRIFLGN (248 aa). [4Fe-4S] cluster-binding residues include C85, C89, and C92.

This sequence belongs to the radical SAM superfamily. CofH family. In terms of assembly, consists of two subunits, CofG and CofH. Requires [4Fe-4S] cluster as cofactor.

It catalyses the reaction 5-amino-6-(D-ribitylamino)uracil + L-tyrosine + S-adenosyl-L-methionine = 5-amino-5-(4-hydroxybenzyl)-6-(D-ribitylimino)-5,6-dihydrouracil + 2-iminoacetate + 5'-deoxyadenosine + L-methionine + H(+). It participates in cofactor biosynthesis; coenzyme F0 biosynthesis. Catalyzes the radical-mediated synthesis of 5-amino-5-(4-hydroxybenzyl)-6-(D-ribitylimino)-5,6-dihydrouracil from 5-amino-6-(D-ribitylamino)uracil and L-tyrosine. The protein is 5-amino-6-(D-ribitylamino)uracil--L-tyrosine 4-hydroxyphenyl transferase of Trichodesmium erythraeum (strain IMS101).